Here is a 90-residue protein sequence, read N- to C-terminus: Large ribosomal subunit protein bL31 (90 aa).

The segment at 65–90 (YSKQEGSGSKSNKSKSTKSKKGKGKK) is disordered. A compositionally biased stretch (basic residues) spans 76-90 (NKSKSTKSKKGKGKK).

This sequence belongs to the bacterial ribosomal protein bL31 family. Type A subfamily. As to quaternary structure, part of the 50S ribosomal subunit.

Functionally, binds the 23S rRNA. This is Large ribosomal subunit protein bL31 from Trichodesmium erythraeum (strain IMS101).